Consider the following 107-residue polypeptide: Cytochrome c2 (107 aa).

Residues Cys14, Cys17, His18, and Met80 each coordinate heme c.

Belongs to the cytochrome c family. In terms of processing, binds 1 heme c group covalently per subunit.

In terms of biological role, cytochrome c2 is found mainly in purple, non-sulfur, photosynthetic bacteria where it functions as the electron donor to the oxidized bacteriochlorophyll in the photophosphorylation pathway. However, it may also have a role in the respiratory chain and is found in some non-photosynthetic bacteria. The sequence is that of Cytochrome c2 from Rhodoblastus acidophilus (Rhodopseudomonas acidophila).